We begin with the raw amino-acid sequence, 191 residues long: Small ribosomal subunit protein uS5 (191 aa).

The 64-residue stretch at 21 to 84 (LVDKLVTINR…ERAKRTMIRV (64 aa)) folds into the S5 DRBM domain. The tract at residues 161–191 (PRHVASRRGKKAAELFGKREQGQTEAEVTNG) is disordered. A compositionally biased stretch (basic and acidic residues) spans 171-182 (KAAELFGKREQG).

This sequence belongs to the universal ribosomal protein uS5 family. In terms of assembly, part of the 30S ribosomal subunit. Contacts proteins S4 and S8.

With S4 and S12 plays an important role in translational accuracy. Its function is as follows. Located at the back of the 30S subunit body where it stabilizes the conformation of the head with respect to the body. The protein is Small ribosomal subunit protein uS5 of Gluconobacter oxydans (strain 621H) (Gluconobacter suboxydans).